A 137-amino-acid chain; its full sequence is MRILGLDLGKKTIGVAISDPLGFTAQGITTIRRANKEKDMEELRKICDEYKVETIVIGLPKNMNGTIGPSGEIAMEMGKLVEEALNIKVEFWDERLTTVAAHKAMLEADLSRSKRKKIVDKVASTYILQGYLDRISK.

It belongs to the YqgF nuclease family.

The protein resides in the cytoplasm. Could be a nuclease involved in processing of the 5'-end of pre-16S rRNA. The protein is Putative pre-16S rRNA nuclease of Clostridium botulinum (strain Alaska E43 / Type E3).